We begin with the raw amino-acid sequence, 301 residues long: Acetyl-coenzyme A carboxylase carboxyl transferase subunit beta (301 aa).

One can recognise a CoA carboxyltransferase N-terminal domain in the interval 25–294 (LWIKCPETGE…SAANDMNSGA (270 aa)).

It belongs to the AccD/PCCB family. As to quaternary structure, acetyl-CoA carboxylase is a heterohexamer composed of biotin carboxyl carrier protein (AccB), biotin carboxylase (AccC) and two subunits each of ACCase subunit alpha (AccA) and ACCase subunit beta (AccD).

It is found in the cytoplasm. The catalysed reaction is N(6)-carboxybiotinyl-L-lysyl-[protein] + acetyl-CoA = N(6)-biotinyl-L-lysyl-[protein] + malonyl-CoA. Its pathway is lipid metabolism; malonyl-CoA biosynthesis; malonyl-CoA from acetyl-CoA: step 1/1. In terms of biological role, component of the acetyl coenzyme A carboxylase (ACC) complex. Biotin carboxylase (BC) catalyzes the carboxylation of biotin on its carrier protein (BCCP) and then the CO(2) group is transferred by the transcarboxylase to acetyl-CoA to form malonyl-CoA. This Rhizobium leguminosarum bv. trifolii (strain WSM1325) protein is Acetyl-coenzyme A carboxylase carboxyl transferase subunit beta.